The following is a 106-amino-acid chain: Ferredoxin-2 (106 aa).

4Fe-4S ferredoxin-type domains lie at tyrosine 2–glutamate 29 and asparagine 30–leucine 59. Residues cysteine 8 and cysteine 16 each coordinate [3Fe-4S] cluster. [4Fe-4S] cluster contacts are provided by cysteine 20, cysteine 39, cysteine 42, and cysteine 45. Cysteine 49 contacts [3Fe-4S] cluster. Residues alanine 80–histidine 106 are disordered.

Requires [4Fe-4S] cluster as cofactor. It depends on [3Fe-4S] cluster as a cofactor.

Functionally, ferredoxins are iron-sulfur proteins that transfer electrons in a wide variety of metabolic reactions. This is Ferredoxin-2 from Rhodospirillum rubrum.